Here is a 411-residue protein sequence, read N- to C-terminus: Ubiquitin-binding protein CUE5 (411 aa).

The span at 1–12 (MEEKEGIKDSSL) shows a compositional bias: basic and acidic residues. Disordered stretches follow at residues 1–102 (MEEK…NPIL) and 142–411 (ESGK…DDEM). Lys15 is covalently cross-linked (Glycyl lysine isopeptide (Lys-Gly) (interchain with G-Cter in ubiquitin)). Phosphoserine occurs at positions 21 and 36. The span at 25–58 (DISKTTDVDLNSDGKKDNDTSAKDGTPKVEEKVN) shows a compositional bias: basic and acidic residues. Lys59 is covalently cross-linked (Glycyl lysine isopeptide (Lys-Gly) (interchain with G-Cter in ubiquitin)). A Phosphothreonine modification is found at Thr70. Lys76 is covalently cross-linked (Glycyl lysine isopeptide (Lys-Gly) (interchain with G-Cter in ubiquitin)). A Phosphoserine modification is found at Ser91. A CUE domain is found at 97–140 (KENPILQELKDAFPNLEEKYIKAVIIASQGVLSPAFNALLFLSD). Lys156 is covalently cross-linked (Glycyl lysine isopeptide (Lys-Gly) (interchain with G-Cter in ubiquitin)). Thr167 is modified (phosphothreonine). Residues 209 to 219 (NPNEREQHHED) are compositionally biased toward basic and acidic residues. Phosphoserine is present on Ser220. The span at 230–242 (VEKDLPELTDRAG) shows a compositional bias: basic and acidic residues. Over residues 245 to 256 (LQDTANKVSNWI) the composition is skewed to polar residues. Phosphoserine is present on residues Ser309 and Ser318. At Thr346 the chain carries Phosphothreonine. Residue Ser348 is modified to Phosphoserine. At Thr352 the chain carries Phosphothreonine. A Glycyl lysine isopeptide (Lys-Gly) (interchain with G-Cter in ubiquitin) cross-link involves residue Lys354. A phosphothreonine mark is found at Thr364 and Thr367. The short motif at 373–376 (WQPL) is the AIM element. Residue Lys396 forms a Glycyl lysine isopeptide (Lys-Gly) (interchain with G-Cter in ubiquitin) linkage. Residues 399–411 (DEDEFLINSDDEM) show a composition bias toward acidic residues. The residue at position 407 (Ser407) is a Phosphoserine.

Interacts with ATG8 (via AIM motif), CLB2, and ubiquitin (via CUE domain).

The protein resides in the cytoplasm. In terms of biological role, connects the ubiquitin pathway to autophagy by functioning as a ubiquitin-ATG8 adapter and thus mediating autophagic clearance of ubiquitin conjugates under starvation conditions. The CUE5-dependent selective autophagy pathway plays an important role in clearance of cytotoxic protein aggregates. Not required for cytoplasmic to vacuole pathway (cvt), mitophagy, pexophagy, or ribophagy. In Saccharomyces cerevisiae (strain ATCC 204508 / S288c) (Baker's yeast), this protein is Ubiquitin-binding protein CUE5.